Reading from the N-terminus, the 585-residue chain is Proline--tRNA ligase (585 aa).

The protein belongs to the class-II aminoacyl-tRNA synthetase family. ProS type 1 subfamily. In terms of assembly, homodimer.

Its subcellular location is the cytoplasm. The catalysed reaction is tRNA(Pro) + L-proline + ATP = L-prolyl-tRNA(Pro) + AMP + diphosphate. Functionally, catalyzes the attachment of proline to tRNA(Pro) in a two-step reaction: proline is first activated by ATP to form Pro-AMP and then transferred to the acceptor end of tRNA(Pro). As ProRS can inadvertently accommodate and process non-cognate amino acids such as alanine and cysteine, to avoid such errors it has two additional distinct editing activities against alanine. One activity is designated as 'pretransfer' editing and involves the tRNA(Pro)-independent hydrolysis of activated Ala-AMP. The other activity is designated 'posttransfer' editing and involves deacylation of mischarged Ala-tRNA(Pro). The misacylated Cys-tRNA(Pro) is not edited by ProRS. This is Proline--tRNA ligase from Cutibacterium acnes (strain DSM 16379 / KPA171202) (Propionibacterium acnes).